Consider the following 301-residue polypeptide: Ribosome-inactivating protein (301 aa).

Residues 1–16 (MAEITLEPSDLMAQTN) constitute a propeptide, or 12 (in 10% of the molecules). The propeptide occupies 162–186 (MATLEEEEVKMQMQMPEAADLAAAA). Residue glutamate 207 is part of the active site. The propeptide occupies 258–301 (VIPDMQKLGIKDKNEAARIVALVKNQTTAAAATAASADNDDDEA).

The protein belongs to the ribosome-inactivating protein family. Type 1 RIP subfamily. As to quaternary structure, synthesized and stored in the kernel as a 34 kDa inactive precursor. During germination, this neutral precursor is converted into a basic, active form by limited proteolysis, which removes 25 AA of net charge -6 from the center of the polypeptide chain. Additional processing also occurs at the N- and C-termini of the polypeptide. A two-chain active RIP (comprised of 16.5 and 8.5 kDa fragments that remain tightly associated) is produced from this processing event.

It catalyses the reaction Endohydrolysis of the N-glycosidic bond at one specific adenosine on the 28S rRNA.. Functionally, potent catalytic inactivator of eukaryotic protein synthesis. It may be a component of natural defense mechanisms involved in protecting the kernel against soil-borne fungal infections. The protein is Ribosome-inactivating protein of Zea mays (Maize).